The following is a 207-amino-acid chain: Large ribosomal subunit protein uL4 (207 aa).

The segment at 48-70 (KAQKTRSEVSGGGAKPWRQKGTG) is disordered.

Belongs to the universal ribosomal protein uL4 family. In terms of assembly, part of the 50S ribosomal subunit.

One of the primary rRNA binding proteins, this protein initially binds near the 5'-end of the 23S rRNA. It is important during the early stages of 50S assembly. It makes multiple contacts with different domains of the 23S rRNA in the assembled 50S subunit and ribosome. In terms of biological role, forms part of the polypeptide exit tunnel. This is Large ribosomal subunit protein uL4 from Francisella philomiragia subsp. philomiragia (strain ATCC 25017 / CCUG 19701 / FSC 153 / O#319-036).